A 209-amino-acid polypeptide reads, in one-letter code: Uracil phosphoribosyltransferase (209 aa).

5-phospho-alpha-D-ribose 1-diphosphate contacts are provided by residues Arg-79, Arg-104, and 131–139; that span reads DPMLATGNS. Uracil is bound by residues Ile-194 and 199-201; that span reads GDA. A 5-phospho-alpha-D-ribose 1-diphosphate-binding site is contributed by Asp-200.

It belongs to the UPRTase family. The cofactor is Mg(2+).

It catalyses the reaction UMP + diphosphate = 5-phospho-alpha-D-ribose 1-diphosphate + uracil. It functions in the pathway pyrimidine metabolism; UMP biosynthesis via salvage pathway; UMP from uracil: step 1/1. Its activity is regulated as follows. Allosterically activated by GTP. Catalyzes the conversion of uracil and 5-phospho-alpha-D-ribose 1-diphosphate (PRPP) to UMP and diphosphate. This Acidovorax ebreus (strain TPSY) (Diaphorobacter sp. (strain TPSY)) protein is Uracil phosphoribosyltransferase.